A 90-amino-acid polypeptide reads, in one-letter code: Small ribosomal subunit protein bS16 (90 aa).

The protein belongs to the bacterial ribosomal protein bS16 family.

In Lysinibacillus sphaericus (strain C3-41), this protein is Small ribosomal subunit protein bS16.